The chain runs to 174 residues: ATP synthase subunit delta (174 aa).

It belongs to the ATPase delta chain family. F-type ATPases have 2 components, F(1) - the catalytic core - and F(0) - the membrane proton channel. F(1) has five subunits: alpha(3), beta(3), gamma(1), delta(1), epsilon(1). F(0) has three main subunits: a(1), b(2) and c(10-14). The alpha and beta chains form an alternating ring which encloses part of the gamma chain. F(1) is attached to F(0) by a central stalk formed by the gamma and epsilon chains, while a peripheral stalk is formed by the delta and b chains.

Its subcellular location is the cell inner membrane. Functionally, f(1)F(0) ATP synthase produces ATP from ADP in the presence of a proton or sodium gradient. F-type ATPases consist of two structural domains, F(1) containing the extramembraneous catalytic core and F(0) containing the membrane proton channel, linked together by a central stalk and a peripheral stalk. During catalysis, ATP synthesis in the catalytic domain of F(1) is coupled via a rotary mechanism of the central stalk subunits to proton translocation. Its function is as follows. This protein is part of the stalk that links CF(0) to CF(1). It either transmits conformational changes from CF(0) to CF(1) or is implicated in proton conduction. The protein is ATP synthase subunit delta of Francisella philomiragia subsp. philomiragia (strain ATCC 25017 / CCUG 19701 / FSC 153 / O#319-036).